A 257-amino-acid chain; its full sequence is DNA repair protein RecO (257 aa).

The protein belongs to the RecO family.

Functionally, involved in DNA repair and RecF pathway recombination. The protein is DNA repair protein RecO of Clostridium kluyveri (strain ATCC 8527 / DSM 555 / NBRC 12016 / NCIMB 10680 / K1).